Here is a 294-residue protein sequence, read N- to C-terminus: tRNA dimethylallyltransferase (294 aa).

10–17 (GPTAVGKT) provides a ligand contact to ATP. 12-17 (TAVGKT) is a substrate binding site. The interaction with substrate tRNA stretch occupies residues 35–38 (DSQQ).

The protein belongs to the IPP transferase family. Monomer. The cofactor is Mg(2+).

It carries out the reaction adenosine(37) in tRNA + dimethylallyl diphosphate = N(6)-dimethylallyladenosine(37) in tRNA + diphosphate. Catalyzes the transfer of a dimethylallyl group onto the adenine at position 37 in tRNAs that read codons beginning with uridine, leading to the formation of N6-(dimethylallyl)adenosine (i(6)A). The polypeptide is tRNA dimethylallyltransferase (Streptococcus suis (strain 98HAH33)).